A 503-amino-acid chain; its full sequence is Potassium voltage-gated channel subfamily V member 1 (503 aa).

Residues 1 to 213 (MELLPPRGRA…EKPGSCTAAR (213 aa)) lie on the Cytoplasmic side of the membrane. The helical transmembrane segment at 214–234 (IFGVISIIFVAVSIVNMALMS) threads the bilayer. Over 235–246 (AELSWLDPQLLE) the chain is Extracellular. Residues 247–267 (ILEYVCISWFTGEFVLRFLCV) traverse the membrane as a helical segment. At 268–279 (RDRCRFLRKVPN) the chain is on the cytoplasmic side. The chain crosses the membrane as a helical span at residues 280–300 (IIDLLAILPFYITLLVESLSG). The Extracellular segment spans residues 301 to 312 (SQTTQELENVGR). The chain crosses the membrane as a helical; Voltage-sensor span at residues 313-334 (IVQVLRLLRALRMLKLGRHSTG). Topologically, residues 335-348 (LRSLGMTITQCYEE) are cytoplasmic. The chain crosses the membrane as a helical span at residues 349–369 (VGLLLLFLSVGISIFSTVEYF). A Selectivity filter motif is present at residues 395 to 400 (TVGYGD). A helical transmembrane segment spans residues 410–430 (IVAFMCILSGILVLALPIAII). The Cytoplasmic segment spans residues 431-503 (NDRFSACYFT…RSSGGDDFWF (73 aa)).

This sequence belongs to the potassium channel family. V (TC 1.A.1.2) subfamily. Kv8.1/KCNV1 sub-subfamily. In terms of assembly, heteromultimer with KCNB1 and KCNB2. Interacts with KCNC4 and KCND1.

The protein localises to the cell membrane. Potassium channel subunit that does not form functional channels by itself. Modulates KCNB1 and KCNB2 channel activity by shifting the threshold for inactivation to more negative values and by slowing the rate of inactivation. Can down-regulate the channel activity of KCNB1, KCNB2, KCNC4 and KCND1, possibly by trapping them in intracellular membranes. The protein is Potassium voltage-gated channel subfamily V member 1 (KCNV1) of Bos taurus (Bovine).